The sequence spans 392 residues: Chaperone protein DnaJ (392 aa).

The J domain maps to 2 to 67 (DYYSILGISK…QKRDSYDRFG (66 aa)). The segment at 148-226 (GVEKELVVSG…CRGQGRVKDK (79 aa)) adopts a CR-type zinc-finger fold. Residues Cys-161, Cys-164, Cys-178, Cys-181, Cys-200, Cys-203, Cys-214, and Cys-217 each coordinate Zn(2+). CXXCXGXG motif repeat units lie at residues 161-168 (CETCSGQG), 178-185 (CERCKGSG), 200-207 (CPECGGEG), and 214-221 (CSSCRGQG).

The protein belongs to the DnaJ family. As to quaternary structure, homodimer. Requires Zn(2+) as cofactor.

Its subcellular location is the cytoplasm. Functionally, participates actively in the response to hyperosmotic and heat shock by preventing the aggregation of stress-denatured proteins and by disaggregating proteins, also in an autonomous, DnaK-independent fashion. Unfolded proteins bind initially to DnaJ; upon interaction with the DnaJ-bound protein, DnaK hydrolyzes its bound ATP, resulting in the formation of a stable complex. GrpE releases ADP from DnaK; ATP binding to DnaK triggers the release of the substrate protein, thus completing the reaction cycle. Several rounds of ATP-dependent interactions between DnaJ, DnaK and GrpE are required for fully efficient folding. Also involved, together with DnaK and GrpE, in the DNA replication of plasmids through activation of initiation proteins. The polypeptide is Chaperone protein DnaJ (Chlamydia pneumoniae (Chlamydophila pneumoniae)).